We begin with the raw amino-acid sequence, 153 residues long: uncharacterized protein (153 aa).

An N-terminal signal peptide occupies residues 1 to 19 (MRKYIPLVLFIFSWPVLCA). Active-site residues include arginine 46, glutamate 54, and arginine 88.

Belongs to the thermonuclease family.

This is an uncharacterized protein from Escherichia coli O157:H7.